The sequence spans 404 residues: NADH-quinone oxidoreductase subunit D (404 aa).

It belongs to the complex I 49 kDa subunit family. NDH-1 is composed of 14 different subunits. Subunits NuoB, C, D, E, F, and G constitute the peripheral sector of the complex.

It is found in the cell inner membrane. The catalysed reaction is a quinone + NADH + 5 H(+)(in) = a quinol + NAD(+) + 4 H(+)(out). Functionally, NDH-1 shuttles electrons from NADH, via FMN and iron-sulfur (Fe-S) centers, to quinones in the respiratory chain. The immediate electron acceptor for the enzyme in this species is believed to be ubiquinone. Couples the redox reaction to proton translocation (for every two electrons transferred, four hydrogen ions are translocated across the cytoplasmic membrane), and thus conserves the redox energy in a proton gradient. In Dinoroseobacter shibae (strain DSM 16493 / NCIMB 14021 / DFL 12), this protein is NADH-quinone oxidoreductase subunit D.